A 677-amino-acid chain; its full sequence is MTTYDTRTATDTRGSEQPGHVGTASYDANAITVLDGLDAVRKRPGMYIGSTGERGLHHLVQELVDNSVDEALAGVADRIDVTVLADGGVRVVDNGRGIPVGMHPVEKRPAVEVVLTVLHAGGKFGGGGYGVSGGLHGVGLSVVNALSTRLSAEIWTDGHRWTQDYRDGAPTAPLARHEATSRTGTSLTFWADGDIFETTEYSFETLARRHQEMAFLNGGLTLTLTDERSSARATAAVDEADSDPTAKTVSYRYDGGITDFVVHLNARKGEPAHPSVITIAAEDTERLLSAEIALQWNGQYTDSVYSYANAIHTHEGGTHEEGFRTALTTVVNRYAREKRLLRDKDANLSGEDIREGLTAIISVNVGEPQFEGQTKTKLGNTEVRTLLQKIVHEHLADWFDRNPNEAVDIVRKAVQAATARVAARKARDLTRRKGLLETAALPGKLSDCQSNDPATSEIFIVEGDSAGGSAKAGRNPQYQAILPIRGKILNVEKARIDKVLQNQENQALISAFGTGVHEDFDIAKLRYHKIILMADADVDGQHISTLLLTFLFRFMRPLVEEGHVHLSRPPLYKIKWSREHVEYAYSDRERNTLLERGRRDGRRIRDDSIQRFKGLGEMNAEELRVTTMDPDHRVLGQVTLDDAAFADDLFSVLMGEDVEARRHFIQRNAQDVRFLDI.

The segment at 1–23 is disordered; sequence MTTYDTRTATDTRGSEQPGHVGT. The segment at 154–295 is novobiocin-binding; it reads IWTDGHRWTQ…RLLSAEIALQ (142 aa). In terms of domain architecture, Toprim spans 456–570; it reads SEIFIVEGDS…EGHVHLSRPP (115 aa). Glu-462, Asp-535, and Asp-537 together coordinate Mg(2+).

It belongs to the type II topoisomerase GyrB family. In terms of assembly, heterotetramer, composed of two GyrA and two GyrB chains. In the heterotetramer, GyrA contains the active site tyrosine that forms a transient covalent intermediate with DNA, while GyrB binds cofactors and catalyzes ATP hydrolysis. The cofactor is Mg(2+). Mn(2+) is required as a cofactor. It depends on Ca(2+) as a cofactor.

The protein resides in the cytoplasm. It catalyses the reaction ATP-dependent breakage, passage and rejoining of double-stranded DNA.. Its function is as follows. A type II topoisomerase that negatively supercoils closed circular double-stranded (ds) DNA in an ATP-dependent manner to modulate DNA topology and maintain chromosomes in an underwound state. Negative supercoiling favors strand separation, and DNA replication, transcription, recombination and repair, all of which involve strand separation. Also able to catalyze the interconversion of other topological isomers of dsDNA rings, including catenanes and knotted rings. Type II topoisomerases break and join 2 DNA strands simultaneously in an ATP-dependent manner. The protein is DNA gyrase subunit B, novobiocin-resistant of Streptomyces niveus (Streptomyces spheroides).